The primary structure comprises 821 residues: Pentatricopeptide repeat-containing protein At4g04790, mitochondrial (821 aa).

Residues 1 to 74 constitute a mitochondrion transit peptide; sequence MVVSKVNKSL…KLLHVTTSDK (74 aa). PPR repeat units lie at residues 372–406, 407–441, 442–476, 477–511, 512–542, 544–574, and 578–612; these read SSTSYEKLVKYSCDSNEVVTALDVVEKMGEAGLMI, SADILHSLLHAIDEVLEFDLVRRIHSIMCTKSVKP, NTENFRSIIRLCTRIKDFEGAYNMLGNLKNFNLEP, NSSMFNCILAGYFREKNVSSALMVVKQMKEAGVKP, DSITFGYLINNCTQEDAITKYYEEMKQAGVQ, TKRIYMSLIDAYAASGKFEKAKQVLVDPDVP, and QNELKSVLISALASRGKWADALHIYEEMRKAECHV. The segment at 801 to 821 is disordered; sequence AFSQAPNKKKPKKKMIVLSTK.

It belongs to the PPR family. P subfamily.

The protein localises to the mitochondrion. In Arabidopsis thaliana (Mouse-ear cress), this protein is Pentatricopeptide repeat-containing protein At4g04790, mitochondrial.